A 566-amino-acid chain; its full sequence is Beta,beta-carotene 15,15'-dioxygenase (566 aa).

His172, His237, His308, and His514 together coordinate Fe cation. Positions 530–566 (PAETQEVENSDHPTDPTAPELSHSENDFTAGHGGSSL) are disordered.

Belongs to the carotenoid oxygenase family. Fe(2+) is required as a cofactor. In terms of tissue distribution, expressed in liver, kidney, small intestine and testis.

It localises to the cytoplasm. Its subcellular location is the cytosol. The enzyme catalyses all-trans-beta-carotene + O2 = 2 all-trans-retinal. It participates in cofactor metabolism; retinol metabolism. Symmetrically cleaves beta-carotene into two molecules of retinal using a dioxygenase mechanism. This Mus musculus (Mouse) protein is Beta,beta-carotene 15,15'-dioxygenase.